A 324-amino-acid chain; its full sequence is Ribose-phosphate pyrophosphokinase 1 (324 aa).

ATP-binding positions include 39 to 41 (DGE) and 98 to 99 (RQ). His132 and Asp174 together coordinate Mg(2+). Residue Lys197 is part of the active site. D-ribose 5-phosphate contacts are provided by residues Arg199, Asp223, and 227–231 (DTAGT).

Belongs to the ribose-phosphate pyrophosphokinase family. Class I subfamily. In terms of assembly, homohexamer. Requires Mg(2+) as cofactor.

The protein resides in the cytoplasm. The enzyme catalyses D-ribose 5-phosphate + ATP = 5-phospho-alpha-D-ribose 1-diphosphate + AMP + H(+). The protein operates within metabolic intermediate biosynthesis; 5-phospho-alpha-D-ribose 1-diphosphate biosynthesis; 5-phospho-alpha-D-ribose 1-diphosphate from D-ribose 5-phosphate (route I): step 1/1. Its function is as follows. Involved in the biosynthesis of the central metabolite phospho-alpha-D-ribosyl-1-pyrophosphate (PRPP) via the transfer of pyrophosphoryl group from ATP to 1-hydroxyl of ribose-5-phosphate (Rib-5-P). This is Ribose-phosphate pyrophosphokinase 1 from Lactococcus lactis subsp. lactis (strain IL1403) (Streptococcus lactis).